Reading from the N-terminus, the 318-residue chain is Curved DNA-binding protein (318 aa).

The 65-residue stretch at Asp5 to Arg69 folds into the J domain. A disordered region spans residues Gly111 to Gly130.

The protein resides in the cytoplasm. It localises to the nucleoid. Functionally, DNA-binding protein that preferentially recognizes a curved DNA sequence. It is probably a functional analog of DnaJ; displays overlapping activities with DnaJ, but functions under different conditions, probably acting as a molecular chaperone in an adaptive response to environmental stresses other than heat shock. Lacks autonomous chaperone activity; binds native substrates and targets them for recognition by DnaK. Its activity is inhibited by the binding of CbpM. This is Curved DNA-binding protein from Pseudomonas putida (strain GB-1).